Reading from the N-terminus, the 274-residue chain is Undecaprenyl-diphosphatase 1 (274 aa).

7 helical membrane-spanning segments follow: residues 8–28 (WLLI…PIPV), 45–65 (IEGL…VIAI), 92–112 (FRIS…ALLF), 120–140 (LKQL…LWLI), 195–215 (FSFF…ISDI), 230–250 (IAFI…MNIM), and 253–273 (GKLI…LSLL).

This sequence belongs to the UppP family.

The protein localises to the cell membrane. The catalysed reaction is di-trans,octa-cis-undecaprenyl diphosphate + H2O = di-trans,octa-cis-undecaprenyl phosphate + phosphate + H(+). Functionally, catalyzes the dephosphorylation of undecaprenyl diphosphate (UPP). Confers resistance to bacitracin. The polypeptide is Undecaprenyl-diphosphatase 1 (Halalkalibacterium halodurans (strain ATCC BAA-125 / DSM 18197 / FERM 7344 / JCM 9153 / C-125) (Bacillus halodurans)).